A 412-amino-acid polypeptide reads, in one-letter code: Protein arginine N-methyltransferase 2 (412 aa).

One can recognise an RMT2 domain in the interval 190-412 (TAADPDTYLN…YYYHPKISFA (223 aa)). S-adenosyl-L-methionine contacts are provided by residues Tyr197, Met227, 250–255 (FGMGII), 271–273 (EAH), 298–299 (WQ), and Asp319.

The protein belongs to the class I-like SAM-binding methyltransferase superfamily. RMT2 methyltransferase family. Monomer.

It localises to the cytoplasm. The protein localises to the nucleus. In terms of biological role, S-adenosyl-L-methionine-dependent protein-arginine N-methyltransferase that methylates the delta-nitrogen atom of arginine residues to form N5-methylarginine (type IV) in target proteins. Monomethylates ribosomal protein L12. The protein is Protein arginine N-methyltransferase 2 of Candida glabrata (strain ATCC 2001 / BCRC 20586 / JCM 3761 / NBRC 0622 / NRRL Y-65 / CBS 138) (Yeast).